The sequence spans 346 residues: Holliday junction branch migration complex subunit RuvB (346 aa).

The span at 1-11 shows a compositional bias: polar residues; it reads MTEQRTIASSA. Residues 1–20 are disordered; the sequence is MTEQRTIASSATREDEAADA. The large ATPase domain (RuvB-L) stretch occupies residues 1-183; sequence MTEQRTIASS…FGIVQRLEFY (183 aa). Residues Ile-22, Arg-23, Gly-64, Lys-67, Thr-68, Thr-69, 130–132, Arg-173, Tyr-183, and Arg-220 each bind ATP; that span reads EDF. Thr-68 serves as a coordination point for Mg(2+). Residues 184-254 are small ATPAse domain (RuvB-S); the sequence is SPQELTRIVI…VAQAAMQMLK (71 aa). The segment at 257–346 is head domain (RuvB-H); it reads PEGFDELDRR…PAIGEPGDLF (90 aa). DNA contacts are provided by Arg-293, Arg-312, and Arg-317.

Belongs to the RuvB family. As to quaternary structure, homohexamer. Forms an RuvA(8)-RuvB(12)-Holliday junction (HJ) complex. HJ DNA is sandwiched between 2 RuvA tetramers; dsDNA enters through RuvA and exits via RuvB. An RuvB hexamer assembles on each DNA strand where it exits the tetramer. Each RuvB hexamer is contacted by two RuvA subunits (via domain III) on 2 adjacent RuvB subunits; this complex drives branch migration. In the full resolvosome a probable DNA-RuvA(4)-RuvB(12)-RuvC(2) complex forms which resolves the HJ.

The protein localises to the cytoplasm. It catalyses the reaction ATP + H2O = ADP + phosphate + H(+). Functionally, the RuvA-RuvB-RuvC complex processes Holliday junction (HJ) DNA during genetic recombination and DNA repair, while the RuvA-RuvB complex plays an important role in the rescue of blocked DNA replication forks via replication fork reversal (RFR). RuvA specifically binds to HJ cruciform DNA, conferring on it an open structure. The RuvB hexamer acts as an ATP-dependent pump, pulling dsDNA into and through the RuvAB complex. RuvB forms 2 homohexamers on either side of HJ DNA bound by 1 or 2 RuvA tetramers; 4 subunits per hexamer contact DNA at a time. Coordinated motions by a converter formed by DNA-disengaged RuvB subunits stimulates ATP hydrolysis and nucleotide exchange. Immobilization of the converter enables RuvB to convert the ATP-contained energy into a lever motion, pulling 2 nucleotides of DNA out of the RuvA tetramer per ATP hydrolyzed, thus driving DNA branch migration. The RuvB motors rotate together with the DNA substrate, which together with the progressing nucleotide cycle form the mechanistic basis for DNA recombination by continuous HJ branch migration. Branch migration allows RuvC to scan DNA until it finds its consensus sequence, where it cleaves and resolves cruciform DNA. This chain is Holliday junction branch migration complex subunit RuvB, found in Xanthomonas campestris pv. campestris (strain B100).